The primary structure comprises 155 residues: Small ribosomal subunit protein uS7 (155 aa).

Belongs to the universal ribosomal protein uS7 family. Part of the 30S ribosomal subunit. Contacts proteins S9 and S11.

In terms of biological role, one of the primary rRNA binding proteins, it binds directly to 16S rRNA where it nucleates assembly of the head domain of the 30S subunit. Is located at the subunit interface close to the decoding center, probably blocks exit of the E-site tRNA. This is Small ribosomal subunit protein uS7 from Desulforapulum autotrophicum (strain ATCC 43914 / DSM 3382 / VKM B-1955 / HRM2) (Desulfobacterium autotrophicum).